Consider the following 71-residue polypeptide: Conotoxin Ca5.1 (71 aa).

The first 19 residues, 1 to 19 (MRCVPVFIILLLLASPAAS), serve as a signal peptide directing secretion. Residues 20-56 (DPLEKRIQSDLIRAALEDADTKNDPRILEDIVSTALA) constitute a propeptide that is removed on maturation.

Belongs to the conotoxin T superfamily. In terms of processing, contains 2 disulfide bonds that can be either 'C1-C3, C2-C4' or 'C1-C4, C2-C3', since these disulfide connectivities have been observed for conotoxins with cysteine framework V (for examples, see AC P0DQQ7 and AC P81755). In terms of tissue distribution, expressed by the venom duct.

Its subcellular location is the secreted. The polypeptide is Conotoxin Ca5.1 (Conus caracteristicus (Characteristic cone)).